A 92-amino-acid chain; its full sequence is Protein 10 (92 aa).

Positions 18-29 (FMQKYDKNSDQH) constitute an EF-hand domain.

It belongs to the calbindin family. As to expression, brain.

The polypeptide is Protein 10 (Cavia porcellus (Guinea pig)).